Reading from the N-terminus, the 770-residue chain is Nucleus-vacuole junction protein 2 (770 aa).

Topologically, residues 1–5 (MASLK) are cytoplasmic. The helical; Signal-anchor for type II membrane protein transmembrane segment at 6 to 26 (VFLAVYLLGGITFLPLVLFTL) threads the bilayer. The Lumenal portion of the chain corresponds to 27-770 (YKIHLLYSNL…EFEEQREPKL (744 aa)). The 153-residue stretch at 114-266 (TALQEQILQR…WYYQLINASK (153 aa)) folds into the PH domain. 7 N-linked (GlcNAc...) asparagine glycosylation sites follow: asparagine 228, asparagine 263, asparagine 279, asparagine 300, asparagine 391, asparagine 528, and asparagine 529. Residues 304–504 (NQLTTKWLNA…YPTPNEVYRG (201 aa)) form the SMP-LTD domain. 3 disordered regions span residues 541–566 (EGGM…LKDL), 578–600 (TQTT…TKSR), and 615–770 (KDNV…EPKL). A compositionally biased stretch (basic and acidic residues) spans 554–566 (LRPERKKENLKDL). Residues 587-596 (NDDVSSSENS) show a composition bias toward polar residues. N-linked (GlcNAc...) asparagine glycans are attached at residues asparagine 595 and asparagine 620. 2 positions are modified to phosphoserine: serine 640 and serine 669. Positions 679–688 (LEGRKEKDTE) are enriched in basic and acidic residues. N-linked (GlcNAc...) asparagine glycosylation is present at asparagine 700. 2 stretches are compositionally biased toward polar residues: residues 713–725 (FSVS…NSLK) and 736–751 (LESS…QNRF). Serine 717 is modified (phosphoserine). The N-linked (GlcNAc...) asparagine glycan is linked to asparagine 718. Serine 720 and serine 723 each carry phosphoserine. Residues 756-770 (FKQDLEFEEQREPKL) show a composition bias toward basic and acidic residues.

The protein resides in the endoplasmic reticulum membrane. Its subcellular location is the nucleus membrane. Functionally, during endoplasmic reticulum (ER) stress or when cellular ceramide levels increase, induces contacts between the ER and medial-Golgi complex to facilitate non-vesicular transport of ceramides from the ER to the Golgi complex where they are converted to complex sphingolipids, preventing toxic ceramide accumulation. This chain is Nucleus-vacuole junction protein 2, found in Saccharomyces cerevisiae (strain ATCC 204508 / S288c) (Baker's yeast).